Consider the following 265-residue polypeptide: Chalcone synthase (265 aa).

Cys-40 is an active-site residue.

This sequence belongs to the thiolase-like superfamily. Chalcone/stilbene synthases family.

The catalysed reaction is (E)-4-coumaroyl-CoA + 3 malonyl-CoA + 3 H(+) = 2',4,4',6'-tetrahydroxychalcone + 3 CO2 + 4 CoA. The protein operates within secondary metabolite biosynthesis; flavonoid biosynthesis. In terms of biological role, the primary product of this enzyme is 4,2',4',6'-tetrahydroxychalcone (also termed naringenin-chalcone or chalcone) which can under specific conditions spontaneously isomerize into naringenin. The sequence is that of Chalcone synthase (CHSII) from Medicago sativa (Alfalfa).